A 209-amino-acid polypeptide reads, in one-letter code: Thiamine-phosphate synthase (209 aa).

Residues 32–36 (QLRMK) and Asp-64 contribute to the 4-amino-2-methyl-5-(diphosphooxymethyl)pyrimidine site. 2 residues coordinate Mg(2+): Asp-65 and Asp-84. Thr-103 is a binding site for 4-amino-2-methyl-5-(diphosphooxymethyl)pyrimidine. 129–131 (TTT) lines the 2-[(2R,5Z)-2-carboxy-4-methylthiazol-5(2H)-ylidene]ethyl phosphate pocket. Lys-132 contacts 4-amino-2-methyl-5-(diphosphooxymethyl)pyrimidine. Gly-165 lines the 2-[(2R,5Z)-2-carboxy-4-methylthiazol-5(2H)-ylidene]ethyl phosphate pocket.

This sequence belongs to the thiamine-phosphate synthase family. Mg(2+) is required as a cofactor.

The catalysed reaction is 2-[(2R,5Z)-2-carboxy-4-methylthiazol-5(2H)-ylidene]ethyl phosphate + 4-amino-2-methyl-5-(diphosphooxymethyl)pyrimidine + 2 H(+) = thiamine phosphate + CO2 + diphosphate. The enzyme catalyses 2-(2-carboxy-4-methylthiazol-5-yl)ethyl phosphate + 4-amino-2-methyl-5-(diphosphooxymethyl)pyrimidine + 2 H(+) = thiamine phosphate + CO2 + diphosphate. It catalyses the reaction 4-methyl-5-(2-phosphooxyethyl)-thiazole + 4-amino-2-methyl-5-(diphosphooxymethyl)pyrimidine + H(+) = thiamine phosphate + diphosphate. It functions in the pathway cofactor biosynthesis; thiamine diphosphate biosynthesis; thiamine phosphate from 4-amino-2-methyl-5-diphosphomethylpyrimidine and 4-methyl-5-(2-phosphoethyl)-thiazole: step 1/1. Condenses 4-methyl-5-(beta-hydroxyethyl)thiazole monophosphate (THZ-P) and 2-methyl-4-amino-5-hydroxymethyl pyrimidine pyrophosphate (HMP-PP) to form thiamine monophosphate (TMP). This is Thiamine-phosphate synthase from Bacteroides thetaiotaomicron (strain ATCC 29148 / DSM 2079 / JCM 5827 / CCUG 10774 / NCTC 10582 / VPI-5482 / E50).